Here is a 324-residue protein sequence, read N- to C-terminus: MHPGLLLVNLGSPASPRTKDVKAYLQEFLSDPSVIEMPAALWQPLLRGIILPTRSWRSATFYQDSWLPQGSPLIVYSQAICQQVQAALPDWNVRLAMTYGQPDIGATLKAMVADGCEKPIILPLFPQYTQSTHGGIHRQVEATGLPHTFIDSFYDQPTYIHLLATKVWQSYQAHHYDAVIFSYHSIPTAMVRHGDPYQRECEATTKAVLAERPELPADKVITAYQSKFGPMPWLKPYLKNELMQLVELGKRNVLVVTPSFVVDCLETLEEDYVQNYQTFRASGGDRFDLVPPMNKDTGFSQFLADLAIQKQEASNHAITSSSKS.

Residues histidine 184 and glutamate 266 each coordinate Fe(2+).

The protein belongs to the ferrochelatase family.

It localises to the cytoplasm. It catalyses the reaction Fe-coproporphyrin III + 2 H(+) = coproporphyrin III + Fe(2+). It functions in the pathway porphyrin-containing compound metabolism; protoheme biosynthesis. Functionally, involved in coproporphyrin-dependent heme b biosynthesis. Catalyzes the insertion of ferrous iron into coproporphyrin III to form Fe-coproporphyrin III. The protein is Coproporphyrin III ferrochelatase of Lactiplantibacillus plantarum (strain ATCC BAA-793 / NCIMB 8826 / WCFS1) (Lactobacillus plantarum).